The chain runs to 255 residues: MLHNIRIVLVETSHTGNIGSTARAMKTMGLSNLYLVNPLHKPDAQAIALSAGASDIIGNASVVDNLDQALAGCSLVVGTSARSRTLPWPMLEPRECGVKSIQEAAQAPVALLFGRERVGLTNDELQKCHFHVQIPANHEYSSLNLAMAVQILAYEVRVAWLDSQRQDATVQEASVYPVAEDLERFYQHLEQVLSGTGFIRRAHPGLVMNKLRRLFNRARPESQELNILRGMLTSIEHTQKPETPAPDTGHGRPQA.

S-adenosyl-L-methionine contacts are provided by residues 79 to 81, Gly-114, Ile-134, and 141 to 143; these read TSA and SSL. Residues 236–255 are disordered; sequence EHTQKPETPAPDTGHGRPQA.

It belongs to the class IV-like SAM-binding methyltransferase superfamily. RNA methyltransferase TrmH family. Homodimer.

The protein resides in the cytoplasm. It carries out the reaction cytidine(32) in tRNA + S-adenosyl-L-methionine = 2'-O-methylcytidine(32) in tRNA + S-adenosyl-L-homocysteine + H(+). It catalyses the reaction uridine(32) in tRNA + S-adenosyl-L-methionine = 2'-O-methyluridine(32) in tRNA + S-adenosyl-L-homocysteine + H(+). Its function is as follows. Catalyzes the formation of 2'O-methylated cytidine (Cm32) or 2'O-methylated uridine (Um32) at position 32 in tRNA. This chain is tRNA (cytidine/uridine-2'-O-)-methyltransferase TrmJ (trmJ), found in Sodalis glossinidius (strain morsitans).